We begin with the raw amino-acid sequence, 418 residues long: Light-independent protochlorophyllide reductase subunit N (418 aa).

Residues C17, C42, and C103 each contribute to the [4Fe-4S] cluster site.

This sequence belongs to the BchN/ChlN family. As to quaternary structure, protochlorophyllide reductase is composed of three subunits; ChlL, ChlN and ChlB. Forms a heterotetramer of two ChlB and two ChlN subunits. Requires [4Fe-4S] cluster as cofactor.

The enzyme catalyses chlorophyllide a + oxidized 2[4Fe-4S]-[ferredoxin] + 2 ADP + 2 phosphate = protochlorophyllide a + reduced 2[4Fe-4S]-[ferredoxin] + 2 ATP + 2 H2O. Its pathway is porphyrin-containing compound metabolism; chlorophyll biosynthesis (light-independent). Its function is as follows. Component of the dark-operative protochlorophyllide reductase (DPOR) that uses Mg-ATP and reduced ferredoxin to reduce ring D of protochlorophyllide (Pchlide) to form chlorophyllide a (Chlide). This reaction is light-independent. The NB-protein (ChlN-ChlB) is the catalytic component of the complex. The polypeptide is Light-independent protochlorophyllide reductase subunit N (Prochlorococcus marinus (strain MIT 9303)).